A 251-amino-acid chain; its full sequence is 5-oxoprolinase subunit A 2 (251 aa).

Belongs to the LamB/PxpA family. In terms of assembly, forms a complex composed of PxpA, PxpB and PxpC.

It catalyses the reaction 5-oxo-L-proline + ATP + 2 H2O = L-glutamate + ADP + phosphate + H(+). In terms of biological role, catalyzes the cleavage of 5-oxoproline to form L-glutamate coupled to the hydrolysis of ATP to ADP and inorganic phosphate. This chain is 5-oxoprolinase subunit A 2, found in Pseudomonas syringae pv. tomato (strain ATCC BAA-871 / DC3000).